A 447-amino-acid chain; its full sequence is Protein chibby homolog 2 (447 aa).

Residues serine 41, serine 85, serine 88, serine 96, serine 123, serine 143, serine 147, and serine 149 each carry the phosphoserine modification. Residues 164–197 (EYLLQEENKSLRDENRALRDENKALRKENKILQV) are a coiled coil. Disordered stretches follow at residues 208 to 244 (HEES…KENT) and 266 to 320 (WAQA…EDSK). Phosphoserine occurs at positions 211 and 224. Residues 218-232 (LHKDTTSQEVVKKDN) are compositionally biased toward basic and acidic residues. A coiled-coil region spans residues 237 to 264 (AQRSKENTLQFIREENRALQQLLEQRQA). Residues 266 to 276 (WAQAEESATSA) are compositionally biased toward low complexity. Residues serine 272 and serine 275 each carry the phosphoserine modification. Residues 277-290 (EEGKPTSSPKEEPH) are compositionally biased toward basic and acidic residues. Phosphoserine occurs at positions 333 and 336. A coiled-coil region spans residues 354–412 (LQLLREMNQALQALREENRLLQEENRALHAMREEHRVFQEENKALWENNKLKLQQRLVI).

The protein belongs to the chibby family. SPERT subfamily. As to quaternary structure, homodimer. Binds to NEK1.

This Rattus norvegicus (Rat) protein is Protein chibby homolog 2 (Cby2).